Reading from the N-terminus, the 565-residue chain is Efflux pump aunC (565 aa).

Residues 1-14 are compositionally biased toward polar residues; that stretch reads MSDTARISGGSFTS. The segment at 1–57 is disordered; that stretch reads MSDTARISGGSFTSPPGRDVELNSFKEASQTRLYPYSSRKEEEGREDEQQRPEREED. The span at 38–54 shows a compositional bias: basic and acidic residues; sequence SRKEEEGREDEQQRPER. The next 14 helical transmembrane spans lie at 59-79, 103-123, 128-148, 164-184, 194-214, 222-242, 257-277, 293-313, 335-355, 378-398, 399-419, 425-445, 457-477, and 530-550; these read GALTGYKLVLVTVGLCFCIFC, DVGWYASAYLLTTCAVTLPFG, FFPIKWVYLSALFVFELGSFI, VAGLGGGGLFSGSLLIITQCV, GFIMSIFAVASVIAPLMGGAF, WCFYINLPFGLVSAVVIFFTF, AAGLDPLGTATFLPAIVCLLL, IIALFTLFGVLLACFVGLQLW, LYGFCLNGAMFTFVYYLPIWF, VIFAIISGVLVSATGYFGPFM, LLSAAMASIAAGLLSMLHPSS, IGYQVLLGSSIGMGFQLPVFV, TATALMTFIQLLGGAIFVSVA, and VHTFYLAIGLAAASFLAATVI.

The protein belongs to the major facilitator superfamily. TCR/Tet family.

Its subcellular location is the cell membrane. In terms of biological role, efflux pump; part of the gene cluster that mediates the biosynthesis of aurasperone B, a dimeric gamma-naphthopyrone. This chain is Efflux pump aunC, found in Aspergillus niger (strain ATCC MYA-4892 / CBS 513.88 / FGSC A1513).